The sequence spans 274 residues: N-acetylmuramic acid 6-phosphate etherase (274 aa).

The SIS domain maps to 54–217 (IIPRIDSGGR…STSVMIKLGR (164 aa)). Glu82 acts as the Proton donor in catalysis. Glu113 is an active-site residue.

Belongs to the GCKR-like family. MurNAc-6-P etherase subfamily. In terms of assembly, homodimer.

The enzyme catalyses N-acetyl-D-muramate 6-phosphate + H2O = N-acetyl-D-glucosamine 6-phosphate + (R)-lactate. Its pathway is amino-sugar metabolism; N-acetylmuramate degradation. Specifically catalyzes the cleavage of the D-lactyl ether substituent of MurNAc 6-phosphate, producing GlcNAc 6-phosphate and D-lactate. The protein is N-acetylmuramic acid 6-phosphate etherase of Christiangramia forsetii (strain DSM 17595 / CGMCC 1.15422 / KT0803) (Gramella forsetii).